A 1430-amino-acid polypeptide reads, in one-letter code: FYVE, RhoGEF and PH domain-containing protein 6 (1430 aa).

The segment at 1–36 is disordered; the sequence is MTSAAEIKKPPVAPKPKFVVANNKPAPPPIAPKPDI. Over residues 15 to 24 the composition is skewed to low complexity; that stretch reads KPKFVVANNK. At Ser231 the chain carries Phosphoserine. The segment at 330-351 is disordered; sequence CVDTPSESTEEPGNSDSSSSCL. The segment covering 334–351 has biased composition (polar residues); sequence PSESTEEPGNSDSSSSCL. Ser515 is modified (phosphoserine). The tract at residues 516–538 is disordered; the sequence is EELLEKSSYPSSEEKSSEKSLER. Over residues 527–538 the composition is skewed to basic and acidic residues; that stretch reads SEEKSSEKSLER. 4 positions are modified to phosphoserine: Ser554, Ser605, Ser692, and Ser721. Disordered regions lie at residues 695–739 and 800–869; these read NYSL…PYKS and PDGQ…NGMK. Polar residues predominate over residues 728-739; sequence SRESSSQAPYKS. A compositionally biased stretch (acidic residues) spans 831-847; sequence PSDEEEIINSSDEDDVS. Residues 851–868 are compositionally biased toward basic and acidic residues; the sequence is SKGEPDPLEDKQDEDNGM. One can recognise a DH domain in the interval 871-1060; it reads KVHHIAKEIM…IEVANHANDT (190 aa). The PH 1 domain occupies 1089-1183; it reads VFLKEGILMK…WLEAISRAIE (95 aa). A Phosphoserine modification is found at Ser1197. The segment at 1222-1281 adopts an FYVE-type zinc-finger fold; the sequence is DTRATMCMICTSEFTLTWRRHHCRACGKIVCQACSSNKYGLDYLKNQPARVCEHCFQELQ. Zn(2+)-binding residues include Cys1228, Cys1231, Cys1244, Cys1247, Cys1252, Cys1255, Cys1273, and Cys1276. Residues 1333–1429 enclose the PH 2 domain; sequence DSSMSGYLYR…WIEAFQEGTI (97 aa).

The protein resides in the cytoplasm. The protein localises to the cytoskeleton. Its function is as follows. May activate CDC42, a member of the Ras-like family of Rho- and Rac proteins, by exchanging bound GDP for free GTP. May play a role in regulating the actin cytoskeleton and cell shape. In Homo sapiens (Human), this protein is FYVE, RhoGEF and PH domain-containing protein 6 (FGD6).